The chain runs to 107 residues: Cytochrome c oxidase assembly protein COX16 homolog, mitochondrial (107 aa).

The Mitochondrial matrix segment spans residues 1 to 14 (MFGYAVRRALRKSK). The chain crosses the membrane as a helical span at residues 15–37 (TLRYGVPMLLLIVGGSFGLREFS). At 38-107 (QIRYDAVKIK…PEILKTNKTT (70 aa)) the chain is on the mitochondrial intermembrane side. Residues 80–107 (NIRGPRPWEDPDLLQGRNPEILKTNKTT) form a disordered region.

Belongs to the COX16 family. As to quaternary structure, associates with the MITRAC complex. Interacts with MT-CO2/COX; specifically interacts with newly synthesized MT-CO2/COX. Interacts with SCO1, SCO2 and COA6.

It is found in the mitochondrion inner membrane. Its function is as follows. Required for the assembly of the mitochondrial respiratory chain complex IV (CIV), also known as cytochrome c oxidase. Promotes the insertion of copper into the active site of cytochrome c oxidase subunit II (MT-CO2/COX2). Interacts specifically with newly synthesized MT-CO2/COX and its copper center-forming metallochaperones SCO1, SCO2 and COA6. Probably facilitates MT-CO2/COX2 association with the MITRAC assembly intermediate containing MT-CO1/COX1, thereby participating in merging the MT-CO1/COX1 and MT-CO2/COX2 assembly lines. This is Cytochrome c oxidase assembly protein COX16 homolog, mitochondrial from Bos taurus (Bovine).